The chain runs to 381 residues: Putative heat shock protein HSP 90-beta 2 (381 aa).

ATP is bound by residues Asn-46, Asp-88, and Lys-107. Residues Lys-145 to Asp-174 show a composition bias toward basic and acidic residues. Residues Lys-145–Lys-192 are disordered. Residue Ser-177 is modified to Phosphoserine. Residues Glu-315–Lys-347 adopt a coiled-coil conformation.

It belongs to the heat shock protein 90 family. As to quaternary structure, homodimer.

It is found in the cytoplasm. In terms of biological role, putative molecular chaperone that may promote the maturation, structural maintenance and proper regulation of specific target proteins. The sequence is that of Putative heat shock protein HSP 90-beta 2 (HSP90AB2P) from Homo sapiens (Human).